A 203-amino-acid polypeptide reads, in one-letter code: ATP-dependent Clp protease proteolytic subunit (203 aa).

The Nucleophile role is filled by serine 107. Histidine 132 is a catalytic residue.

The protein belongs to the peptidase S14 family. Fourteen ClpP subunits assemble into 2 heptameric rings which stack back to back to give a disk-like structure with a central cavity, resembling the structure of eukaryotic proteasomes.

Its subcellular location is the cytoplasm. It carries out the reaction Hydrolysis of proteins to small peptides in the presence of ATP and magnesium. alpha-casein is the usual test substrate. In the absence of ATP, only oligopeptides shorter than five residues are hydrolyzed (such as succinyl-Leu-Tyr-|-NHMec, and Leu-Tyr-Leu-|-Tyr-Trp, in which cleavage of the -Tyr-|-Leu- and -Tyr-|-Trp bonds also occurs).. Cleaves peptides in various proteins in a process that requires ATP hydrolysis. Has a chymotrypsin-like activity. Plays a major role in the degradation of misfolded proteins. The sequence is that of ATP-dependent Clp protease proteolytic subunit from Shewanella denitrificans (strain OS217 / ATCC BAA-1090 / DSM 15013).